A 211-amino-acid chain; its full sequence is Probable nicotinate-nucleotide adenylyltransferase (211 aa).

This sequence belongs to the NadD family.

The enzyme catalyses nicotinate beta-D-ribonucleotide + ATP + H(+) = deamido-NAD(+) + diphosphate. It functions in the pathway cofactor biosynthesis; NAD(+) biosynthesis; deamido-NAD(+) from nicotinate D-ribonucleotide: step 1/1. Its function is as follows. Catalyzes the reversible adenylation of nicotinate mononucleotide (NaMN) to nicotinic acid adenine dinucleotide (NaAD). In Thermoanaerobacter sp. (strain X514), this protein is Probable nicotinate-nucleotide adenylyltransferase.